We begin with the raw amino-acid sequence, 219 residues long: Putative NAD(P)H nitroreductase SSP0379 (219 aa).

The protein belongs to the nitroreductase family. FMN is required as a cofactor.

This chain is Putative NAD(P)H nitroreductase SSP0379, found in Staphylococcus saprophyticus subsp. saprophyticus (strain ATCC 15305 / DSM 20229 / NCIMB 8711 / NCTC 7292 / S-41).